The primary structure comprises 462 residues: PTS system mannitol-specific cryptic EIICB component (462 aa).

The Cytoplasmic segment spans residues 1-24 (MENKSARAKVQAFGGFLTAMVIPN). Positions 13-344 (FGGFLTAMVI…LKMEKTVETE (332 aa)) constitute a PTS EIIC type-2 domain. Residues 25–46 (IGAFIAWGFITALFIPTGWLPN) form a helical membrane-spanning segment. Over 47 to 50 (EHFA) the chain is Periplasmic. Residues 51–71 (KIVGPMITYLLPVMIGSTGGH) form a helical membrane-spanning segment. At 72–134 (LVGGKRGAVM…AGFEMVINNF (63 aa)) the chain is on the cytoplasmic side. Residues 135–156 (SLGIAGMLLCLLGFEVIGPAVL) form a helical membrane-spanning segment. Over 157–165 (IANTFVKEC) the chain is Periplasmic. Residues 166-186 (IEALVHAGYLPLLSVINEPAK) form a helical membrane-spanning segment. The Cytoplasmic portion of the chain corresponds to 187–273 (VLFLNNAIDQ…VLMKPLTIIA (87 aa)). Residues 274–293 (MIAGGMSGTWMFNLLDGGLV) traverse the membrane as a helical segment. Over 294–313 (AGPSPGSIFAYLALTPKGSF) the chain is Periplasmic. Residues 314–335 (LATIAGVTVGTLVSFAITSLIL) form a helical membrane-spanning segment. Residues 336–462 (KMEKTVETES…FNQLTAEHKH (127 aa)) lie on the Cytoplasmic side of the membrane. The PTS EIIB type-2 domain occupies 371 to 461 (KRIAFVCDAG…LFNQLTAEHK (91 aa)). Residue cysteine 377 is the Phosphocysteine intermediate; for EIIB activity of the active site. Cysteine 377 is subject to Phosphocysteine; by EIIA.

It is found in the cell inner membrane. It carries out the reaction D-mannitol(out) + N(pros)-phospho-L-histidyl-[protein] = D-mannitol 1-phosphate(in) + L-histidyl-[protein]. Functionally, the phosphoenolpyruvate-dependent sugar phosphotransferase system (sugar PTS), a major carbohydrate active transport system, catalyzes the phosphorylation of incoming sugar substrates concomitantly with their translocation across the cell membrane. The enzyme II CmtAB PTS system is involved in D-mannitol transport. The chain is PTS system mannitol-specific cryptic EIICB component (cmtA) from Escherichia coli O157:H7.